The primary structure comprises 323 residues: Protein translocase subunit SecF (323 aa).

At 1–22 the chain is on the cytoplasmic side; it reads MAQEYTVEQLNHGRKVYDFMRW. A helical membrane pass occupies residues 23–43; that stretch reads DYWAFGISGLLLIAAIVIMGV. The Periplasmic portion of the chain corresponds to 44–142; it reads RGFNWGLDFT…FVGPSVGADL (99 aa). The chain crosses the membrane as a helical span at residues 143 to 163; sequence AQTGAMALMAALLSILVYVGF. The Cytoplasmic portion of the chain corresponds to 164–170; sequence RFEWRLA. Residues 171-191 traverse the membrane as a helical segment; that stretch reads AGVVIALAHDVIITLGILSLF. At 192 to 196 the chain is on the periplasmic side; that stretch reads HIEID. Residues 197 to 217 traverse the membrane as a helical segment; that stretch reads LTIVASLMSVIGYSLNDSIVV. Residues 218 to 247 are Cytoplasmic-facing; sequence SDRIRENFRKIRRGTPYEIFNVSLTQTLHR. Residues 248 to 270 form a helical membrane-spanning segment; that stretch reads TLITSGTTLMVILMLYLFGGPVL. Residues 271–280 are Periplasmic-facing; sequence EGFSLTMLIG. Residues 281–301 form a helical membrane-spanning segment; the sequence is VSIGTASSIYVASALALKLGM. Residues 302–323 are Cytoplasmic-facing; sequence KREHMLQQKVEKEGADQPSILP.

It belongs to the SecD/SecF family. SecF subfamily. As to quaternary structure, forms a complex with SecD. Part of the essential Sec protein translocation apparatus which comprises SecA, SecYEG and auxiliary proteins SecDF-YajC and YidC.

Its subcellular location is the cell inner membrane. In terms of biological role, part of the Sec protein translocase complex. Interacts with the SecYEG preprotein conducting channel. SecDF uses the proton motive force (PMF) to complete protein translocation after the ATP-dependent function of SecA. The chain is Protein translocase subunit SecF from Escherichia coli O157:H7.